The chain runs to 450 residues: Tubulin alpha-3E chain (450 aa).

Residues 1–4 carry the MREC motif motif; the sequence is MREC. Gln11 is a GTP binding site. Position 40 is an N6-acetyllysine (Lys40). The GTP site is built by Glu71, Ser140, Gly144, Thr145, Thr179, Asn206, and Asn228. A Mg(2+)-binding site is contributed by Glu71. Glu254 is an active-site residue. Residue Tyr282 is modified to 3'-nitrotyrosine. Residue Ser439 is modified to Phosphoserine. Tyr450 carries the post-translational modification 3'-nitrotyrosine.

This sequence belongs to the tubulin family. As to quaternary structure, dimer of alpha and beta chains. A typical microtubule is a hollow water-filled tube with an outer diameter of 25 nm and an inner diameter of 15 nM. Alpha-beta heterodimers associate head-to-tail to form protofilaments running lengthwise along the microtubule wall with the beta-tubulin subunit facing the microtubule plus end conferring a structural polarity. Microtubules usually have 13 protofilaments but different protofilament numbers can be found in some organisms and specialized cells. Requires Mg(2+) as cofactor. Post-translationally, some glutamate residues at the C-terminus are polyglutamylated, resulting in polyglutamate chains on the gamma-carboxyl group. Polyglutamylation plays a key role in microtubule severing by spastin (SPAST). SPAST preferentially recognizes and acts on microtubules decorated with short polyglutamate tails: severing activity by SPAST increases as the number of glutamates per tubulin rises from one to eight, but decreases beyond this glutamylation threshold. Glutamylation is also involved in cilia motility. Some glutamate residues at the C-terminus are monoglycylated but not polyglycylated due to the absence of functional TTLL10 in human. Monoglycylation is mainly limited to tubulin incorporated into cilia and flagella axonemes, which is required for their stability and maintenance. Flagella glycylation controls sperm motility. Both polyglutamylation and monoglycylation can coexist on the same protein on adjacent residues, and lowering glycylation levels increases polyglutamylation, and reciprocally. In terms of processing, acetylation of alpha chains at Lys-40 is located inside the microtubule lumen. This modification has been correlated with increased microtubule stability, intracellular transport and ciliary assembly. Post-translationally, methylation of alpha chains at Lys-40 is found in mitotic microtubules and is required for normal mitosis and cytokinesis contributing to genomic stability. Nitration of Tyr-450 is irreversible and interferes with normal dynein intracellular distribution. In terms of processing, undergoes a tyrosination/detyrosination cycle, the cyclic removal and re-addition of a C-terminal tyrosine residue by the enzymes tubulin tyrosine carboxypeptidase (MATCAP1/KIAA0895L, VASH1 or VASH2) and tubulin tyrosine ligase (TTL), respectively. Post-translationally, tyrosination promotes microtubule interaction with CAP-Gly domain-containing proteins such as CLIP1, CLIP2 and DCTN1. Tyrosination regulates the initiation of dynein-dynactin motility via interaction with DCTN1, which brings the dynein-dynactin complex into contact with microtubules. In neurons, tyrosinated tubulins mediate the initiation of retrograde vesicle transport. Detyrosination is involved in metaphase plate congression by guiding chromosomes during mitosis: detyrosination promotes interaction with CENPE, promoting pole-proximal transport of chromosomes toward the equator. Detyrosination increases microtubules-dependent mechanotransduction in dystrophic cardiac and skeletal muscle. In cardiomyocytes, detyrosinated microtubules are required to resist to contractile compression during contraction: detyrosination promotes association with desmin (DES) at force-generating sarcomeres, leading to buckled microtubules and mechanical resistance to contraction.

It localises to the cytoplasm. It is found in the cytoskeleton. The catalysed reaction is GTP + H2O = GDP + phosphate + H(+). In terms of biological role, tubulin is the major constituent of microtubules, a cylinder consisting of laterally associated linear protofilaments composed of alpha- and beta-tubulin heterodimers. Microtubules grow by the addition of GTP-tubulin dimers to the microtubule end, where a stabilizing cap forms. Below the cap, tubulin dimers are in GDP-bound state, owing to GTPase activity of alpha-tubulin. This is Tubulin alpha-3E chain (TUBA3E) from Homo sapiens (Human).